The following is a 332-amino-acid chain: Beta-ketoacyl-[acyl-carrier-protein] synthase III (332 aa).

Active-site residues include Cys116 and His255. The ACP-binding stretch occupies residues 256–260 (QANLR). Asn285 is a catalytic residue.

This sequence belongs to the thiolase-like superfamily. FabH family. In terms of assembly, homodimer.

It is found in the cytoplasm. It catalyses the reaction malonyl-[ACP] + acetyl-CoA + H(+) = 3-oxobutanoyl-[ACP] + CO2 + CoA. The protein operates within lipid metabolism; fatty acid biosynthesis. In terms of biological role, catalyzes the condensation reaction of fatty acid synthesis by the addition to an acyl acceptor of two carbons from malonyl-ACP. Catalyzes the first condensation reaction which initiates fatty acid synthesis and may therefore play a role in governing the total rate of fatty acid production. Possesses both acetoacetyl-ACP synthase and acetyl transacylase activities. Its substrate specificity determines the biosynthesis of branched-chain and/or straight-chain of fatty acids. This chain is Beta-ketoacyl-[acyl-carrier-protein] synthase III, found in Helicobacter hepaticus (strain ATCC 51449 / 3B1).